The primary structure comprises 1407 residues: DNA-directed RNA polymerase subunit beta' (1407 aa).

The Zn(2+) site is built by cysteine 70, cysteine 72, cysteine 85, and cysteine 88. 3 residues coordinate Mg(2+): aspartate 460, aspartate 462, and aspartate 464. The Zn(2+) site is built by cysteine 814, cysteine 888, cysteine 895, and cysteine 898. The residue at position 972 (lysine 972) is an N6-acetyllysine.

Belongs to the RNA polymerase beta' chain family. In terms of assembly, the RNAP catalytic core consists of 2 alpha, 1 beta, 1 beta' and 1 omega subunit. When a sigma factor is associated with the core the holoenzyme is formed, which can initiate transcription. Mg(2+) serves as cofactor. The cofactor is Zn(2+).

It carries out the reaction RNA(n) + a ribonucleoside 5'-triphosphate = RNA(n+1) + diphosphate. Functionally, DNA-dependent RNA polymerase catalyzes the transcription of DNA into RNA using the four ribonucleoside triphosphates as substrates. The chain is DNA-directed RNA polymerase subunit beta' from Escherichia coli O6:H1 (strain CFT073 / ATCC 700928 / UPEC).